The chain runs to 512 residues: Cobyric acid synthase (512 aa).

One can recognise a GATase cobBQ-type domain in the interval Ala251–Phe451. Residue Cys332 is the Nucleophile of the active site. His443 is a catalytic residue.

The protein belongs to the CobB/CobQ family. CobQ subfamily.

It functions in the pathway cofactor biosynthesis; adenosylcobalamin biosynthesis. Its function is as follows. Catalyzes amidations at positions B, D, E, and G on adenosylcobyrinic A,C-diamide. NH(2) groups are provided by glutamine, and one molecule of ATP is hydrogenolyzed for each amidation. This Photorhabdus laumondii subsp. laumondii (strain DSM 15139 / CIP 105565 / TT01) (Photorhabdus luminescens subsp. laumondii) protein is Cobyric acid synthase.